We begin with the raw amino-acid sequence, 95 residues long: RING finger protein Z (95 aa).

Glycine 2 carries N-myristoyl glycine; by host lipidation. The RING-type; atypical zinc-finger motif lies at 38–74; sequence CKSCWFANKGLLKCSNHYLCLKCLTLMLRRSDYCGIC. Positions 88 to 91 match the PTAP/PSAP motif motif; it reads PSAP.

It belongs to the arenaviridae Z protein family. Interacts with protein NP; this interaction probably directs the encapsidated genome to budding sites. Interacts (via RING domain) with polymerase L; this interaction inhibits viral transcription and replication, Z partially blocks the product exit tunnel for the releasing nascent RNA product. Interacts with the glycoprotein complex; this interaction plays a role in virion budding. Interacts with host eIF4E; this interaction results in eIF4E reduced affinity for its substrate, the 5'-m7 G cap structure. Interacts (via late-budding domain) with host TSG101; this interaction is essential for budding and release of viral particles. Interacts with host RPLP0; this interaction may serve to load ribosome-like particles inside the virion. Interacts with host PML; this interaction induces PML bodies redistribution in the cytoplasm upon viral infection. Myristoylation is required for the role of RING finger protein Z in assembly and budding.

The protein resides in the virion. It is found in the host cytoplasm. Its subcellular location is the host perinuclear region. The protein localises to the host cell membrane. Functionally, plays a crucial role in virion assembly and budding. Expressed late in the virus life cycle, it acts as an inhibitor of viral transcription and RNA synthesis by interacting with the viral polymerase L. Presumably recruits the NP encapsidated genome to cellular membranes at budding sites via direct interaction with NP. Plays critical roles in the final steps of viral release by interacting with host TSG101, a member of the vacuolar protein-sorting pathway and using other cellular host proteins involved in vesicle formation pathway. The budding of the virus progeny occurs after association of protein Z with the viral glycoprotein complex SSP-GP1-GP2 at the cell periphery, step that requires myristoylation of protein Z. Also selectively represses protein production by associating with host eIF4E. In cell-based minigenome assay, has an inhibitory effect on the ribonucleoprotein machinery (vRNP), which is responsible for the replication and transcription of the viral genome. This chain is RING finger protein Z, found in Neotoma (wood rats).